The chain runs to 345 residues: NADPH-dependent oxidoreductase 2-alkenal reductase (345 aa).

NADP(+) is bound by residues 52-53 (PY), 163-169 (AASGAVG), Gly-188, Lys-192, Tyr-208, Asn-232, Cys-254, Tyr-260, 284-286 (FVV), Phe-330, and 334-336 (NVG). Tyr-53 contributes to the substrate binding site. Tyr-260 contributes to the substrate binding site.

It belongs to the NADP-dependent oxidoreductase L4BD family. In terms of assembly, homodimer. As to expression, expressed in leaves.

It is found in the cytoplasm. The protein resides in the nucleus. The protein localises to the nucleoplasm. The enzyme catalyses an n-alkanal + NAD(+) = an alk-2-enal + NADH + H(+). The catalysed reaction is an n-alkanal + NADP(+) = an alk-2-enal + NADPH + H(+). Inhibited by N-ethylmaleimide and p-chloromercuribenzoic acid. Functionally, involved in the detoxification of reactive carbonyls. Acts on lipid peroxide-derived reactive aldehydes. Specific to a double bond activated by an adjacent carbonyl group. Can use both quinones and diamide as substrates, but not menadione, ferricyanide or phylloquinone. Can use 4-hydroxy-(2E)-nonenal (HNE), 4-hydroxy-(2E)-hexenal (HHE), (2E)-nonenal, (2E)-hexenal, (2E)-pentenal, propenal (acrolein), 3-buten-2-one and 3-penten-2-one, but not (R)-(-)-carvone, n-nonanal, n-hexanal, (3Z)-hexanal, cyclohex-2-en-1-one or 12-oxo phytodienoic acid (OPDA) as electron acceptors. Catalyzes the reduction of the alpha,beta-unsaturated bond of 2-alkenals, of lipid peroxide-derived oxenes 9-oxo-10(E),12(Z)-octadecadienoic acid (9-KODE) and 13-oxo-9(Z),11(E)-octadecadienoic acid (13-KODE), as well as 4-oxo-(2E)-nonenal and 4-hydroxynonenal. Can use 12-oxo-10(E) dodecanoate (traumatin), trans-1,3 diphenyl-2-propenone, trans-1,4-diphenyl-2-butene-1,4-dione, 9-oxo-12,13-epoxy-(10E)-octadecenoic acid (trans-EKODE-1b) and 9,13-dihydroxy-10-oxo-11-octadecenoic acid as substrates. Catalyzes the reduction of the 7-8 double bond of phenylpropanal substrates, such as p-coumaryl aldehyde and coniferyl aldehyde (in vitro). Has activity towards toxic substrates, such as 4-hydroxy-(2E)-nonenal (in vitro). May play a distinct role in plant antioxidant defense and is possibly involved in NAD(P)/NAD(P)H homeostasis. The protein is NADPH-dependent oxidoreductase 2-alkenal reductase of Arabidopsis thaliana (Mouse-ear cress).